The following is a 52-amino-acid chain: MGKQAEFWSESKNNSKIDGQPKAKSRFASKRPNGTINTHPQERMRAANQQEE.

Residues 1-52 form a disordered region; it reads MGKQAEFWSESKNNSKIDGQPKAKSRFASKRPNGTINTHPQERMRAANQQEE.

The protein belongs to the SspK family.

The protein localises to the spore core. This is Small, acid-soluble spore protein K from Bacillus anthracis (strain A0248).